The sequence spans 136 residues: UPF0310 protein SMU_442 (136 aa).

The protein belongs to the UPF0310 family.

This is UPF0310 protein SMU_442 from Streptococcus mutans serotype c (strain ATCC 700610 / UA159).